The primary structure comprises 122 residues: Basic phospholipase A2 PLA-B (122 aa).

7 cysteine pairs are disulfide-bonded: Cys26/Cys115, Cys28/Cys44, Cys43/Cys95, Cys49/Cys122, Cys50/Cys88, Cys57/Cys81, and Cys75/Cys86. Tyr27, Gly29, and Gly31 together coordinate Ca(2+). Residue His47 is part of the active site. Residue Asp48 participates in Ca(2+) binding. The active site involves Asp89.

This sequence belongs to the phospholipase A2 family. Group II subfamily. D49 sub-subfamily. Requires Ca(2+) as cofactor. As to expression, expressed by the venom gland.

It is found in the secreted. The catalysed reaction is a 1,2-diacyl-sn-glycero-3-phosphocholine + H2O = a 1-acyl-sn-glycero-3-phosphocholine + a fatty acid + H(+). Snake venom phospholipase A2 (PLA2) that displays edema-inducing activities. PLA-B is three times more active than PLA-A in edema-inducing activities. PLA2 catalyzes the calcium-dependent hydrolysis of the 2-acyl groups in 3-sn-phosphoglycerides. This Protobothrops flavoviridis (Habu) protein is Basic phospholipase A2 PLA-B.